The sequence spans 321 residues: tRNA(Ile)-lysidine synthase (321 aa).

S21–S26 contacts ATP.

It belongs to the tRNA(Ile)-lysidine synthase family.

The protein resides in the cytoplasm. The catalysed reaction is cytidine(34) in tRNA(Ile2) + L-lysine + ATP = lysidine(34) in tRNA(Ile2) + AMP + diphosphate + H(+). Its function is as follows. Ligates lysine onto the cytidine present at position 34 of the AUA codon-specific tRNA(Ile) that contains the anticodon CAU, in an ATP-dependent manner. Cytidine is converted to lysidine, thus changing the amino acid specificity of the tRNA from methionine to isoleucine. This is tRNA(Ile)-lysidine synthase from Campylobacter jejuni subsp. jejuni serotype O:2 (strain ATCC 700819 / NCTC 11168).